Reading from the N-terminus, the 205-residue chain is Large ribosomal subunit protein uL4 (205 aa).

The disordered stretch occupies residues 44-79; sequence RAGTKAQKTRREVSGGGAKPWRQKGTGRARAGSSRS.

This sequence belongs to the universal ribosomal protein uL4 family. Part of the 50S ribosomal subunit.

One of the primary rRNA binding proteins, this protein initially binds near the 5'-end of the 23S rRNA. It is important during the early stages of 50S assembly. It makes multiple contacts with different domains of the 23S rRNA in the assembled 50S subunit and ribosome. Functionally, forms part of the polypeptide exit tunnel. This Coxiella burnetii (strain RSA 331 / Henzerling II) protein is Large ribosomal subunit protein uL4.